The sequence spans 356 residues: Cell division control protein 10 (356 aa).

A Septin-type G domain is found at 36 to 286; the sequence is KGFELNVLVV…NNYRKKIFEI (251 aa). The interval 46–53 is G1 motif; it reads GRRGLGTS. GTP is bound by residues 46–53 and T70; that span reads GRRGLGTS. The G3 motif stretch occupies residues 93 to 96; the sequence is TYHE. Positions 163 to 166 are G4 motif; sequence PKAD. GTP is bound by residues 164–172 and R235; that span reads KADMYTPDE.

It belongs to the TRAFAC class TrmE-Era-EngA-EngB-Septin-like GTPase superfamily. Septin GTPase family. Component of the septin complex.

Functionally, septins are GTPases involved in cytokinesis. The septins localize to the site of cleavage and act as a structural scaffold that recruits different components involved in diverse processes at specific stages during the cell cycle. Septins are also involved in cell morphogenesis, chitin deposition, cell cycle regulation, cell compartmentalization and spore wall formation. The sequence is that of Cell division control protein 10 (CDC10) from Encephalitozoon cuniculi (strain GB-M1) (Microsporidian parasite).